The chain runs to 509 residues: Glutamyl-tRNA(Gln) amidotransferase subunit B, mitochondrial (509 aa).

This sequence belongs to the GatB/GatE family. GatB subfamily. In terms of assembly, subunit of the heterotrimeric GatFAB amidotransferase (AdT) complex, composed of A, B and F subunits.

The protein localises to the mitochondrion. The enzyme catalyses L-glutamyl-tRNA(Gln) + L-glutamine + ATP + H2O = L-glutaminyl-tRNA(Gln) + L-glutamate + ADP + phosphate + H(+). Its function is as follows. Allows the formation of correctly charged Gln-tRNA(Gln) through the transamidation of misacylated Glu-tRNA(Gln) in the mitochondria. The reaction takes place in the presence of glutamine and ATP through an activated gamma-phospho-Glu-tRNA(Gln). The chain is Glutamyl-tRNA(Gln) amidotransferase subunit B, mitochondrial from Candida dubliniensis (strain CD36 / ATCC MYA-646 / CBS 7987 / NCPF 3949 / NRRL Y-17841) (Yeast).